The following is a 248-amino-acid chain: Probable transcriptional regulatory protein FTW_1073 (248 aa).

The protein belongs to the TACO1 family.

Its subcellular location is the cytoplasm. The protein is Probable transcriptional regulatory protein FTW_1073 of Francisella tularensis subsp. tularensis (strain WY96-3418).